A 468-amino-acid chain; its full sequence is ATP synthase subunit beta (468 aa).

Gly155–Thr162 provides a ligand contact to ATP.

Belongs to the ATPase alpha/beta chains family. In terms of assembly, F-type ATPases have 2 components, CF(1) - the catalytic core - and CF(0) - the membrane proton channel. CF(1) has five subunits: alpha(3), beta(3), gamma(1), delta(1), epsilon(1). CF(0) has three main subunits: a(1), b(2) and c(9-12). The alpha and beta chains form an alternating ring which encloses part of the gamma chain. CF(1) is attached to CF(0) by a central stalk formed by the gamma and epsilon chains, while a peripheral stalk is formed by the delta and b chains.

The protein localises to the cell membrane. It catalyses the reaction ATP + H2O + 4 H(+)(in) = ADP + phosphate + 5 H(+)(out). Functionally, produces ATP from ADP in the presence of a proton gradient across the membrane. The catalytic sites are hosted primarily by the beta subunits. The sequence is that of ATP synthase subunit beta from Streptococcus suis (strain 98HAH33).